The primary structure comprises 1169 residues: RecBCD enzyme subunit RecB (1169 aa).

The region spanning 1-436 (MNKILEKIQN…IVLKINHRSS (436 aa)) is the UvrD-like helicase ATP-binding domain. Positions 1–839 (MNKILEKIQN…LLEIAKIFTI (839 aa)) are DNA-binding and helicase activity, interacts with RecC. 18-25 (ASAGTGKT) contributes to the ATP binding site. The 288-residue stretch at 459–746 (IEKIDFTNSL…ELMTIHKSKG (288 aa)) folds into the UvrD-like helicase C-terminal domain. Residues 883 to 1169 (KEYTSSFSSL…ILELGIKRHL (287 aa)) are nuclease activity, interacts with RecD and RecA. Mg(2+)-binding residues include His-939, Asp-1052, and Asp-1065. Asp-1065 acts as the For nuclease activity in catalysis.

Belongs to the helicase family. UvrD subfamily. In terms of assembly, heterotrimer of RecB, RecC and RecD. All subunits contribute to DNA-binding. Interacts with RecA. Requires Mg(2+) as cofactor.

It catalyses the reaction Exonucleolytic cleavage (in the presence of ATP) in either 5'- to 3'- or 3'- to 5'-direction to yield 5'-phosphooligonucleotides.. It carries out the reaction Couples ATP hydrolysis with the unwinding of duplex DNA by translocating in the 3'-5' direction.. The enzyme catalyses ATP + H2O = ADP + phosphate + H(+). A helicase/nuclease that prepares dsDNA breaks (DSB) for recombinational DNA repair. Binds to DSBs and unwinds DNA via a highly rapid and processive ATP-dependent bidirectional helicase activity. Unwinds dsDNA until it encounters a Chi (crossover hotspot instigator) sequence from the 3' direction. Cuts ssDNA a few nucleotides 3' to the Chi site. The properties and activities of the enzyme are changed at Chi. The Chi-altered holoenzyme produces a long 3'-ssDNA overhang and facilitates RecA-binding to the ssDNA for homologous DNA recombination and repair. Holoenzyme degrades any linearized DNA that is unable to undergo homologous recombination. In the holoenzyme this subunit contributes ATPase, 3'-5' helicase, exonuclease activity and loads RecA onto ssDNA. This Borreliella burgdorferi (strain ATCC 35210 / DSM 4680 / CIP 102532 / B31) (Borrelia burgdorferi) protein is RecBCD enzyme subunit RecB.